The following is a 186-amino-acid chain: MITLGVDPGSIVTGYGVIGKSEAGFRVFDYSAIRPGGKCDFPQRIKYIYDTLEKVICAYKPTQLSLETAFYGKNAQSALKLGQVRGAIIILAMNYNLKFVEYSPREVKKSVAGTGNASKEQVAYMVKKMLSIDDEKMALDTSDALAIALCGHFKSASMAASEFKKQSRKATSWGEYILQNPQVVVK.

Active-site residues include Asp7, Glu67, and Asp140. Mg(2+)-binding residues include Asp7, Glu67, and Asp140.

Belongs to the RuvC family. Homodimer which binds Holliday junction (HJ) DNA. The HJ becomes 2-fold symmetrical on binding to RuvC with unstacked arms; it has a different conformation from HJ DNA in complex with RuvA. In the full resolvosome a probable DNA-RuvA(4)-RuvB(12)-RuvC(2) complex forms which resolves the HJ. The cofactor is Mg(2+).

The protein localises to the cytoplasm. It carries out the reaction Endonucleolytic cleavage at a junction such as a reciprocal single-stranded crossover between two homologous DNA duplexes (Holliday junction).. In terms of biological role, the RuvA-RuvB-RuvC complex processes Holliday junction (HJ) DNA during genetic recombination and DNA repair. Endonuclease that resolves HJ intermediates. Cleaves cruciform DNA by making single-stranded nicks across the HJ at symmetrical positions within the homologous arms, yielding a 5'-phosphate and a 3'-hydroxyl group; requires a central core of homology in the junction. The consensus cleavage sequence is 5'-(A/T)TT(C/G)-3'. Cleavage occurs on the 3'-side of the TT dinucleotide at the point of strand exchange. HJ branch migration catalyzed by RuvA-RuvB allows RuvC to scan DNA until it finds its consensus sequence, where it cleaves and resolves the cruciform DNA. The chain is Crossover junction endodeoxyribonuclease RuvC from Chloroherpeton thalassium (strain ATCC 35110 / GB-78).